Here is a 61-residue protein sequence, read N- to C-terminus: Large ribosomal subunit protein uL30 (61 aa).

The protein belongs to the universal ribosomal protein uL30 family. In terms of assembly, part of the 50S ribosomal subunit.

The polypeptide is Large ribosomal subunit protein uL30 (Parafrankia sp. (strain EAN1pec)).